The chain runs to 811 residues: Lon protease 1 (811 aa).

A Lon N-terminal domain is found at 15–212 (LPVLSLRDTV…SLALHLYRQI (198 aa)). 376–383 (GPPGTGKT) provides a ligand contact to ATP. A Lon proteolytic domain is found at 613-794 (YDQPGVATGM…DEALARCLRL (182 aa)). Catalysis depends on residues serine 700 and lysine 743.

This sequence belongs to the peptidase S16 family. Homohexamer. Organized in a ring with a central cavity.

The protein resides in the cytoplasm. It catalyses the reaction Hydrolysis of proteins in presence of ATP.. Functionally, ATP-dependent serine protease that mediates the selective degradation of mutant and abnormal proteins as well as certain short-lived regulatory proteins. Required for cellular homeostasis and for survival from DNA damage and developmental changes induced by stress. Degrades polypeptides processively to yield small peptide fragments that are 5 to 10 amino acids long. Binds to DNA in a double-stranded, site-specific manner. This is Lon protease 1 from Sorangium cellulosum (strain So ce56) (Polyangium cellulosum (strain So ce56)).